The following is a 238-amino-acid chain: U2 small nuclear ribonucleoprotein A' (238 aa).

LRR repeat units lie at residues proline 53–aspartate 74, aspartate 75–proline 95, and asparagine 97–arginine 118. The region spanning asparagine 132–phenylalanine 170 is the LRRCT domain. A disordered region spans residues alanine 167 to asparagine 189.

Belongs to the U2 small nuclear ribonucleoprotein A family. In terms of assembly, belongs to the CWC complex (or CEF1-associated complex), a spliceosome sub-complex reminiscent of a late-stage spliceosome composed of the U2, U5 and U6 snRNAs and at least BUD13, BUD31, BRR2, CDC40, CEF1, CLF1, CUS1, CWC2, CWC15, CWC21, CWC22, CWC23, CWC24, CWC25, CWC27, ECM2, HSH155, IST3, ISY1, LEA1, MSL1, NTC20, PRP8, PRP9, PRP11, PRP19, PRP21, PRP22, PRP45, PRP46, SLU7, SMB1, SMD1, SMD2, SMD3, SMX2, SMX3, SNT309, SNU114, SPP2, SYF1, SYF2, RSE1 and YJU2. Interacts with MSL1.

It is found in the nucleus. In terms of biological role, involved in pre-mRNA splicing. Associates to U2 snRNA in a MSL1 dependent manner and is required for normal accumulation of U2 snRNA. Required for the spliceosome assembly and the efficient addition of U2 snRNP onto the pre-mRNA. This Saccharomyces cerevisiae (strain ATCC 204508 / S288c) (Baker's yeast) protein is U2 small nuclear ribonucleoprotein A' (LEA1).